A 313-amino-acid polypeptide reads, in one-letter code: Adhesin MafA 2/3 (313 aa).

The N-terminal stretch at 1-14 (MKTLLLLIPLVLTA) is a signal peptide. Residue Cys15 is the site of N-palmitoyl cysteine attachment. Cys15 is lipidated: S-diacylglycerol cysteine. A compositionally biased stretch (polar residues) spans 282 to 298 (GDTTAQNRPDFKQNNGK). A disordered region spans residues 282–313 (GDTTAQNRPDFKQNNGKNPDVGNEVIRRRKGG).

Belongs to the MafA family.

It is found in the cell outer membrane. This chain is Adhesin MafA 2/3 (mafA2), found in Neisseria gonorrhoeae (strain ATCC 700825 / FA 1090).